We begin with the raw amino-acid sequence, 202 residues long: Stress enhanced protein 2, chloroplastic (202 aa).

A chloroplast-targeting transit peptide spans 1-60 (MAMATRAIRYQLPSPRFRAPRCESSEPIKQIQIQQRPRGGDLAENGKIVLQPRLCTLRSY). The next 2 membrane-spanning stretches (helical) occupy residues 111–131 (LAMIVFAVTVTEEIVTGNSLF) and 142–162 (AIGAGLAAMGCAAMFAWLTIS).

It belongs to the ELIP/psbS family.

It localises to the plastid. The protein resides in the chloroplast thylakoid membrane. May be involved in non-photochemical quenching, a process that maintains the balance between dissipation and utilization of light energy to minimize generation of oxidizing molecules, thereby protecting the plant against photo-oxidative damage. May play a photoprotective role in the thylakoid membrane in response to light stress. The polypeptide is Stress enhanced protein 2, chloroplastic (Arabidopsis thaliana (Mouse-ear cress)).